The chain runs to 208 residues: Small ribosomal subunit protein uS4 (208 aa).

The region spanning 98–163 is the S4 RNA-binding domain; that stretch reads QRLDNVVYRM…NPQITRAIEL (66 aa).

Belongs to the universal ribosomal protein uS4 family. In terms of assembly, part of the 30S ribosomal subunit. Contacts protein S5. The interaction surface between S4 and S5 is involved in control of translational fidelity.

Functionally, one of the primary rRNA binding proteins, it binds directly to 16S rRNA where it nucleates assembly of the body of the 30S subunit. With S5 and S12 plays an important role in translational accuracy. The sequence is that of Small ribosomal subunit protein uS4 from Campylobacter jejuni subsp. jejuni serotype O:6 (strain 81116 / NCTC 11828).